The chain runs to 1161 residues: Lethal(2) giant larvae protein (1161 aa).

The segment at 15–86 (DRHRLQKDLF…NNSASELNVQ (72 aa)) is phospho-regulated basic and hydrophobic (PRBH) motif. WD repeat units lie at residues 39–72 (SALA…LYGQ), 82–128 (ELNV…DGKL), 131–167 (VSSL…EPVI), 189–223 (SIRQ…QRAY), 231–263 (SVGL…PEPP), 278–320 (SINR…GHKV), 328–358 (VIDF…AYDL), and 380–464 (TCNY…YNFK). Phosphoserine occurs at positions 473 and 484. 2 WD repeats span residues 513-594 (KKIA…SGVL) and 603-664 (TCMA…LRES). Phosphoserine is present on Ser-679. WD repeat units lie at residues 708-778 (VRCL…KEIQ), 787-832 (GISI…LKPI), 837-927 (LTAN…LNAA), and 941-964 (CFTN…ALAT). 6 positions are modified to phosphoserine: Ser-808, Ser-869, Ser-876, Ser-887, Ser-889, and Ser-893. At Ser-1013 the chain carries Phosphoserine. Residues 1141–1161 (EKTNGDNKIGTPKTAPEESQF) are disordered.

The protein belongs to the WD repeat L(2)GL family. As to quaternary structure, may form multimeric complexes. Interacts with mahj. Interacts with aPKC; leading to phosphorylation. Interacts with ball. In terms of processing, phosphorylated by aPKC which lowers lipid affinity and promotes dissociation from the cell cortex. In developing oocytes, aPKC-mediated phosphorylation restricts activity to the oocyte posterior and is required for oocyte polarity formation. As to expression, expressed in the epithelial cells of the digestive tract and in gonads.

It localises to the cytoplasm. The protein localises to the cell cortex. Its function is as follows. Essential for the development of polarized epithelia, for cell polarity associated with asymmetric cell division of neuroblasts during development, and for oocyte polarity formation. Promotes the formation of actin-rich projections at the oocyte cortex and the posterior enrichment of par-1 which is required for oocyte polarization. Regulates the localization of axis-specifying morphogens such as stau and grk. Functionally, has an essential role in control of cell proliferation and differentiation during development and could act as a tumor suppressor. In terms of biological role, has an accessory function in control of cell proliferation and differentiation during development. This chain is Lethal(2) giant larvae protein (l(2)gl), found in Drosophila melanogaster (Fruit fly).